Reading from the N-terminus, the 416-residue chain is UPF0761 membrane protein Mpe_A1422 (416 aa).

6 helical membrane-spanning segments follow: residues 63-83 (IALV…PMFG), 120-140 (LGTV…LTID), 159-179 (VLVY…SLTL), 198-218 (LSVL…AGLF), 234-256 (GGLF…LAQV), and 271-291 (IFLI…VIAA).

The protein belongs to the UPF0761 family.

It localises to the cell inner membrane. This chain is UPF0761 membrane protein Mpe_A1422, found in Methylibium petroleiphilum (strain ATCC BAA-1232 / LMG 22953 / PM1).